The sequence spans 409 residues: Glycosaminoglycan xylosylkinase (409 aa).

Residues 1–6 are Cytoplasmic-facing; that stretch reads MKLKQR. Residues 7–25 traverse the membrane as a helical; Signal-anchor for type II membrane protein segment; the sequence is VVLLAILLVIFIFTKVFLI. Topologically, residues 26 to 409 are lumenal; sequence DNLDTSAANR…VEDRMPLSHL (384 aa). Positions 107 and 123 each coordinate ATP. Residue aspartate 142 coordinates Mn(2+). A glycan (N-linked (GlcNAc...) asparagine) is linked at asparagine 193. 2 cysteine pairs are disulfide-bonded: cysteine 196–cysteine 211 and cysteine 201–cysteine 204. 222–225 lines the ATP pocket; the sequence is TLWL. Cystine bridges form between cysteine 257–cysteine 331 and cysteine 332–cysteine 389. Aspartate 289 is an active-site residue. The ATP site is built by glutamate 294 and aspartate 309. Aspartate 309 serves as a coordination point for Mn(2+).

It belongs to the FAM20 family. Requires Mn(2+) as cofactor. In terms of tissue distribution, widely expressed. Strongly expressed in pancreas, spleen and fetal liver.

The protein localises to the golgi apparatus membrane. It carries out the reaction 3-O-(beta-D-galactosyl-(1-&gt;3)-beta-D-galactosyl-(1-&gt;4)-beta-D-xylosyl)-L-seryl-[protein] + ATP = 3-O-(beta-D-galactosyl-(1-&gt;3)-beta-D-galactosyl-(1-&gt;4)-beta-D-2-O-phosphoxylosyl)-L-seryl-[protein] + ADP + H(+). In terms of biological role, responsible for the 2-O-phosphorylation of xylose in the glycosaminoglycan-protein linkage region of proteoglycans thereby regulating the amount of mature GAG chains. Sulfated glycosaminoglycans (GAGs), including heparan sulfate and chondroitin sulfate, are synthesized on the so-called common GAG-protein linkage region (GlcUAbeta1-3Galbeta1-3Galbeta1-4Xylbeta1-O-Ser) of core proteins, which is formed by the stepwise addition of monosaccharide residues by the respective specific glycosyltransferases. Xylose 2-O-phosphorylation may influence the catalytic activity of B3GAT3 (GlcAT-I) which completes the precursor tetrasaccharide of GAG-protein linkage regions on which the repeating disaccharide region is synthesized. The protein is Glycosaminoglycan xylosylkinase of Homo sapiens (Human).